The chain runs to 227 residues: Venom allergen 5 (227 aa).

An N-terminal signal peptide occupies residues 1–21 (MKISCLICLVIVLTIIHLSQA). Cystine bridges form between Cys-25-Cys-37, Cys-29-Cys-125, Cys-49-Cys-117, and Cys-193-Cys-210. Positions 69-212 (EEHNRFRQKV…MQIHYLICNY (144 aa)) constitute an SCP domain.

The protein belongs to the CRISP family. Venom allergen 5-like subfamily. As to expression, expressed by the venom gland.

It is found in the secreted. In Polistes dominula (European paper wasp), this protein is Venom allergen 5.